We begin with the raw amino-acid sequence, 220 residues long: Octanoyltransferase (220 aa).

In terms of domain architecture, BPL/LPL catalytic spans 27–208 (PGTADEIWLC…QLARAHGHAV (182 aa)). Substrate is bound by residues 66–73 (RGGQVTYH), 139–141 (ALG), and 152–154 (GLA). C170 (acyl-thioester intermediate) is an active-site residue.

It belongs to the LipB family.

The protein localises to the cytoplasm. The enzyme catalyses octanoyl-[ACP] + L-lysyl-[protein] = N(6)-octanoyl-L-lysyl-[protein] + holo-[ACP] + H(+). The protein operates within protein modification; protein lipoylation via endogenous pathway; protein N(6)-(lipoyl)lysine from octanoyl-[acyl-carrier-protein]: step 1/2. Its function is as follows. Catalyzes the transfer of endogenously produced octanoic acid from octanoyl-acyl-carrier-protein onto the lipoyl domains of lipoate-dependent enzymes. Lipoyl-ACP can also act as a substrate although octanoyl-ACP is likely to be the physiological substrate. The polypeptide is Octanoyltransferase (Bordetella parapertussis (strain 12822 / ATCC BAA-587 / NCTC 13253)).